We begin with the raw amino-acid sequence, 182 residues long: Small ribosomal subunit protein uS4 (182 aa).

2 disordered regions span residues 1–23 (MGHP…ADRI) and 158–182 (SSVA…KDEE). An S4 RNA-binding domain is found at 103-170 (RRLQSLVFKR…AKQFETQETE (68 aa)). Residues 167-182 (QETEEVAAEEEPKDEE) are compositionally biased toward acidic residues.

It belongs to the universal ribosomal protein uS4 family. As to quaternary structure, part of the 30S ribosomal subunit. Contacts protein S5. The interaction surface between S4 and S5 is involved in control of translational fidelity.

Its function is as follows. One of the primary rRNA binding proteins, it binds directly to 16S rRNA where it nucleates assembly of the body of the 30S subunit. With S5 and S12 plays an important role in translational accuracy. The chain is Small ribosomal subunit protein uS4 from Methanosphaera stadtmanae (strain ATCC 43021 / DSM 3091 / JCM 11832 / MCB-3).